We begin with the raw amino-acid sequence, 549 residues long: Probable protein kinase UbiB (549 aa).

A Protein kinase domain is found at 123–501; sequence DFDETPLASA…QQQAHKSNYL (379 aa). ATP contacts are provided by residues 129–137 and Lys-152; that span reads LASASISQV. The Proton acceptor role is filled by Asp-287. 2 helical membrane passes run 498 to 518 and 520 to 540; these read SNYL…LFNQ and ATLW…IIGW.

It belongs to the ABC1 family. UbiB subfamily.

It is found in the cell inner membrane. It participates in cofactor biosynthesis; ubiquinone biosynthesis [regulation]. Functionally, is probably a protein kinase regulator of UbiI activity which is involved in aerobic coenzyme Q (ubiquinone) biosynthesis. This Shewanella sp. (strain ANA-3) protein is Probable protein kinase UbiB.